Consider the following 468-residue polypeptide: Histone acetyltransferase type B catalytic subunit (468 aa).

Residue serine 8 is modified to Phosphoserine. Interaction with histone H4 N-terminus regions lie at residues 44–46 (EEE) and 208–210 (YKF). Acetyl-CoA is bound by residues 248–250 (FLI) and 255–261 (QKSGNGS). Glutamate 283 serves as the catalytic Proton donor/acceptor. The segment at 442-468 (SSNLKRKLDDDENTEGSSSKKARVEDA) is disordered.

It belongs to the HAT1 family. In terms of assembly, component of the HAT-B complex composed of at least HAT1 and HAT2. The HAT-B complex binds to histone H4 tail. In the nucleus, interacts with GSK1 and SSB1. In the cytoplasm, interacts with ATG3 and ATG9. Post-translationally, phosphorylated at Ser-8 by GSK1 in the nucleus which impairs its translocation to the cytoplasm through interfering the interaction between HAT1 and SSB1. Dephosphorylation under nutrient starvation conditions promotes the interaction between HAT1 and SSB1 and results in the translocation of HAT1 from the nucleus to the cytoplasm in order to acetylate ATG3 and ATG9.

It localises to the nucleus. The protein localises to the cytoplasm. Its subcellular location is the preautophagosomal structure. It catalyses the reaction L-lysyl-[protein] + acetyl-CoA = N(6)-acetyl-L-lysyl-[protein] + CoA + H(+). In terms of biological role, catalytic component of the histone acetylase B (HAT-B) complex. Has intrinsic substrate specificity that modifies lysine in recognition sequence GXGKXG. Involved in DNA double-strand break repair. Required for appressorium turgor pressure, autophagy and conidial nuclear degradation. During the germination process and upon starvation conditions, translocates from the nucleus to the cytoplasm where it acetylates ATG3 at 'lys-262' and 'Lys-267', thus influencing autophagy through controlling ATG3-ATG8 interaction. Also acetylates ATG9 at 'Lys-621' to regulate ATG9 binding to vesicles, which is also important for autophagy and pathogenicity. The sequence is that of Histone acetyltransferase type B catalytic subunit from Pyricularia oryzae (strain 70-15 / ATCC MYA-4617 / FGSC 8958) (Rice blast fungus).